The chain runs to 401 residues: Formate-dependent phosphoribosylglycinamide formyltransferase (401 aa).

N(1)-(5-phospho-beta-D-ribosyl)glycinamide is bound by residues 22 to 23 (EL) and E82. ATP-binding positions include R115, K157, 162-167 (SSGKGQ), 197-200 (EGFI), and E205. An ATP-grasp domain is found at 120 to 315 (RLAAESLGLP…EFELHARAIL (196 aa)). Mg(2+)-binding residues include E274 and E286. N(1)-(5-phospho-beta-D-ribosyl)glycinamide-binding positions include D293, K362, and 369 to 370 (RR).

Belongs to the PurK/PurT family. Homodimer.

The catalysed reaction is N(1)-(5-phospho-beta-D-ribosyl)glycinamide + formate + ATP = N(2)-formyl-N(1)-(5-phospho-beta-D-ribosyl)glycinamide + ADP + phosphate + H(+). It participates in purine metabolism; IMP biosynthesis via de novo pathway; N(2)-formyl-N(1)-(5-phospho-D-ribosyl)glycinamide from N(1)-(5-phospho-D-ribosyl)glycinamide (formate route): step 1/1. Involved in the de novo purine biosynthesis. Catalyzes the transfer of formate to 5-phospho-ribosyl-glycinamide (GAR), producing 5-phospho-ribosyl-N-formylglycinamide (FGAR). Formate is provided by PurU via hydrolysis of 10-formyl-tetrahydrofolate. This chain is Formate-dependent phosphoribosylglycinamide formyltransferase, found in Cupriavidus necator (strain ATCC 17699 / DSM 428 / KCTC 22496 / NCIMB 10442 / H16 / Stanier 337) (Ralstonia eutropha).